The sequence spans 366 residues: uncharacterized protein (366 aa).

In terms of domain architecture, CP-type G spans 59–222 (LNILHGIGET…LYDTPGIINN (164 aa)).

Belongs to the TRAFAC class YlqF/YawG GTPase family.

Its function is as follows. Binds GTP and GDP. This is an uncharacterized protein from Bacillus subtilis (strain 168).